We begin with the raw amino-acid sequence, 355 residues long: uncharacterized protein (355 aa).

An N-terminal signal peptide occupies residues 1-21 (MQKKVLFNDIVFVCFPITDNG). 6 N-linked (GlcNAc...) asparagine; by host glycosylation sites follow: asparagine 20, asparagine 78, asparagine 87, asparagine 156, asparagine 159, and asparagine 274. Topologically, residues 22 to 331 (SIIISDIGYS…SSTSFFSRYG (310 aa)) are virion surface. Positions 288–317 (GSKSTPNGPNGPTPTPSNGPNGPTPVPGIP) are disordered. The segment covering 296-317 (PNGPTPTPSNGPNGPTPVPGIP) has biased composition (pro residues). N-linked (GlcNAc...) asparagine; by host glycosylation occurs at asparagine 320. Residues 332 to 352 (LWIIIAIILLIVIISAVGIYF) form a helical membrane-spanning segment. Topologically, residues 353–355 (YLR) are intravirion.

The protein localises to the host membrane. It is found in the virion. This is an uncharacterized protein from Acanthamoeba polyphaga mimivirus (APMV).